Here is a 365-residue protein sequence, read N- to C-terminus: tRNA/tmRNA (uracil-C(5))-methyltransferase (365 aa).

S-adenosyl-L-methionine is bound by residues Gln189, Tyr217, Asn222, Glu238, and Asp298. Cys323 functions as the Nucleophile in the catalytic mechanism. Catalysis depends on Glu357, which acts as the Proton acceptor.

This sequence belongs to the class I-like SAM-binding methyltransferase superfamily. RNA M5U methyltransferase family. TrmA subfamily.

It carries out the reaction uridine(54) in tRNA + S-adenosyl-L-methionine = 5-methyluridine(54) in tRNA + S-adenosyl-L-homocysteine + H(+). It catalyses the reaction uridine(341) in tmRNA + S-adenosyl-L-methionine = 5-methyluridine(341) in tmRNA + S-adenosyl-L-homocysteine + H(+). Functionally, dual-specificity methyltransferase that catalyzes the formation of 5-methyluridine at position 54 (m5U54) in all tRNAs, and that of position 341 (m5U341) in tmRNA (transfer-mRNA). This chain is tRNA/tmRNA (uracil-C(5))-methyltransferase, found in Shewanella pealeana (strain ATCC 700345 / ANG-SQ1).